Here is a 309-residue protein sequence, read N- to C-terminus: Mitochondrial import receptor subunit TOM34 (309 aa).

Position 8 is a phosphoserine (serine 8). 3 TPR repeats span residues 9–42 (VEEL…LQAQ), 51–84 (SVLY…VPFS), and 86–118 (KPLL…DDNV). At serine 160 the chain carries Phosphoserine. The tract at residues 161–189 (LPSENHKEMAKSKSKETTATKNRVPSAGD) is disordered. Residues 164 to 178 (ENHKEMAKSKSKETT) are compositionally biased toward basic and acidic residues. Residue serine 186 is modified to Phosphoserine. TPR repeat units lie at residues 193–226 (ARVL…SNLE), 227–260 (SATY…DGKN), and 262–294 (KAFY…EPRN). Residue lysine 197 forms a Glycyl lysine isopeptide (Lys-Gly) (interchain with G-Cter in SUMO2) linkage.

It belongs to the Tom34 family. In terms of assembly, interacts with HSP90A, VCP, ATP6V1D, KIAA0665, AMPK, and DMAP1 through its TPR repeat. Ubiquitous.

It localises to the cytoplasm. Its subcellular location is the mitochondrion outer membrane. Plays a role in the import of cytosolically synthesized preproteins into mitochondria. Binds the mature portion of precursor proteins. Interacts with cellular components, and possesses weak ATPase activity. May be a chaperone-like protein that helps to keep newly synthesized precursors in an unfolded import compatible state. In Homo sapiens (Human), this protein is Mitochondrial import receptor subunit TOM34 (TOMM34).